The primary structure comprises 554 residues: CTP synthase (554 aa).

The segment at 1–265 (MTPLIFVTGG…DELVIDQFKL (265 aa)) is amidoligase domain. Position 13 (serine 13) interacts with CTP. Serine 13 is a binding site for UTP. ATP contacts are provided by residues 14-19 (SLGKGI) and aspartate 71. Residues aspartate 71 and glutamate 139 each coordinate Mg(2+). CTP-binding positions include 146 to 148 (DIE), 186 to 191 (KTKPTQ), and lysine 222. Residues 186–191 (KTKPTQ) and lysine 222 contribute to the UTP site. Positions 292 to 545 (TIAVVGKYVD…VRAAREKKAG (254 aa)) constitute a Glutamine amidotransferase type-1 domain. Glycine 353 lines the L-glutamine pocket. The active-site Nucleophile; for glutamine hydrolysis is the cysteine 380. Residues 381-384 (YGMQ), glutamate 404, and arginine 471 contribute to the L-glutamine site. Residues histidine 518 and glutamate 520 contribute to the active site.

It belongs to the CTP synthase family. In terms of assembly, homotetramer.

It carries out the reaction UTP + L-glutamine + ATP + H2O = CTP + L-glutamate + ADP + phosphate + 2 H(+). The catalysed reaction is L-glutamine + H2O = L-glutamate + NH4(+). It catalyses the reaction UTP + NH4(+) + ATP = CTP + ADP + phosphate + 2 H(+). It participates in pyrimidine metabolism; CTP biosynthesis via de novo pathway; CTP from UDP: step 2/2. Allosterically activated by GTP, when glutamine is the substrate; GTP has no effect on the reaction when ammonia is the substrate. The allosteric effector GTP functions by stabilizing the protein conformation that binds the tetrahedral intermediate(s) formed during glutamine hydrolysis. Inhibited by the product CTP, via allosteric rather than competitive inhibition. Functionally, catalyzes the ATP-dependent amination of UTP to CTP with either L-glutamine or ammonia as the source of nitrogen. Regulates intracellular CTP levels through interactions with the four ribonucleotide triphosphates. This Xanthomonas campestris pv. campestris (strain B100) protein is CTP synthase.